The chain runs to 186 residues: Holliday junction branch migration complex subunit RuvA (186 aa).

Residues 1-61 (MYRYIKGIVT…EDIFQLYGFK (61 aa)) form a domain I region. Positions 62–134 (DEETLNLFLK…LKGKLVNDEL (73 aa)) are domain II. Residues 134–137 (LDMQ) are flexible linker. The domain III stretch occupies residues 138 to 186 (LLSDNSKDVAAALEALGYNKKEIAKSLKHVNFDQDLNKALKEALAILLK).

Belongs to the RuvA family. Homotetramer. Forms an RuvA(8)-RuvB(12)-Holliday junction (HJ) complex. HJ DNA is sandwiched between 2 RuvA tetramers; dsDNA enters through RuvA and exits via RuvB. An RuvB hexamer assembles on each DNA strand where it exits the tetramer. Each RuvB hexamer is contacted by two RuvA subunits (via domain III) on 2 adjacent RuvB subunits; this complex drives branch migration. In the full resolvosome a probable DNA-RuvA(4)-RuvB(12)-RuvC(2) complex forms which resolves the HJ.

It is found in the cytoplasm. In terms of biological role, the RuvA-RuvB-RuvC complex processes Holliday junction (HJ) DNA during genetic recombination and DNA repair, while the RuvA-RuvB complex plays an important role in the rescue of blocked DNA replication forks via replication fork reversal (RFR). RuvA specifically binds to HJ cruciform DNA, conferring on it an open structure. The RuvB hexamer acts as an ATP-dependent pump, pulling dsDNA into and through the RuvAB complex. HJ branch migration allows RuvC to scan DNA until it finds its consensus sequence, where it cleaves and resolves the cruciform DNA. This Acholeplasma laidlawii (strain PG-8A) protein is Holliday junction branch migration complex subunit RuvA.